The primary structure comprises 304 residues: Glutaminase (304 aa).

Substrate is bound by residues Ser63, Asn114, Glu158, Asn165, Tyr189, Tyr240, and Val258.

This sequence belongs to the glutaminase family. As to quaternary structure, homotetramer.

It carries out the reaction L-glutamine + H2O = L-glutamate + NH4(+). In Shewanella putrefaciens (strain CN-32 / ATCC BAA-453), this protein is Glutaminase.